We begin with the raw amino-acid sequence, 162 residues long: Ribonuclease (162 aa).

A signal peptide spans 1–29; sequence MKKISSVFTMFALIAAILFSGFIPQQAYA. Positions 30–53 are excised as a propeptide; sequence ETPLTQTATNETATIQLTSDVHTL. Glu-125 (proton acceptor) is an active-site residue. The active-site Proton donor is His-154.

Belongs to the ribonuclease N1/T1 family.

It localises to the secreted. This is a purine-specific ribonuclease. This Bacillus intermedius protein is Ribonuclease.